We begin with the raw amino-acid sequence, 35 residues long: Jingzhaotoxin F5-21.66 (35 aa).

Disulfide bonds link cysteine 2–cysteine 16, cysteine 9–cysteine 21, and cysteine 15–cysteine 29.

Belongs to the neurotoxin 10 (Hwtx-1) family. 48 (Jztx-F5) subfamily. Expressed by the venom gland.

The protein resides in the secreted. Its function is as follows. Probable ion channel inhibitor. The chain is Jingzhaotoxin F5-21.66 from Chilobrachys guangxiensis (Chinese earth tiger tarantula).